Here is a 134-residue protein sequence, read N- to C-terminus: Small ribosomal subunit protein bS16 (134 aa).

The disordered stretch occupies residues 79–134 (AGIAKRPSRNNPTKGEPGKKAQERLALAKQAEEEAAAKAAEAAAAAAAPAEEAASE). Residues 115-134 (AKAAEAAAAAAAPAEEAASE) are compositionally biased toward low complexity.

It belongs to the bacterial ribosomal protein bS16 family.

In Brucella canis (strain ATCC 23365 / NCTC 10854 / RM-666), this protein is Small ribosomal subunit protein bS16.